A 287-amino-acid chain; its full sequence is Complement C1q-like protein 2 (287 aa).

Residues 1 to 21 (MALGLLIAVPLLLQAAPPGAA) form the signal peptide. A disordered region spans residues 65–144 (LSANPPPPFI…GTGGGGDTEG (80 aa)). The 43-residue stretch at 76-118 (GPKGDPGRPGKPGPRGPPGEPGPPGPRGPPGEKGDSGRPGLPG) folds into the Collagen-like domain. Residues 84–104 (PGKPGPRGPPGEPGPPGPRGP) show a composition bias toward pro residues. Residues 127-141 (GGVGVVSGGTGGGGD) are compositionally biased toward gly residues. In terms of domain architecture, C1q spans 154–287 (FSGPKIAFYV…TFSGFLLYPD (134 aa)).

As to quaternary structure, forms homotrimers which can further assemble to form higher-order oligomeric complexes. Interacts with ADGRB3. May interact with ERFE. Forms heterooligomers with C1QL3 and C1QL4, when proteins are coexpressed; this interaction does not occur after secretion. Glycosylated, but not with N-linked glycans. As to expression, highest expression in eye, followed by placenta and brain, intermediate expression in adipose tissue and lowest expression in lymph node and testis.

The protein resides in the secreted. In terms of biological role, may regulate the number of excitatory synapses that are formed on hippocampus neurons. Has no effect on inhibitory synapses. The sequence is that of Complement C1q-like protein 2 (C1ql2) from Mus musculus (Mouse).